A 1384-amino-acid polypeptide reads, in one-letter code: DNA-directed RNA polymerase subunit beta' (1384 aa).

Cys-81, Cys-83, Cys-96, and Cys-99 together coordinate Zn(2+). Mg(2+) is bound by residues Asp-472, Asp-474, and Asp-476.

Belongs to the RNA polymerase beta' chain family. In terms of assembly, the RNAP catalytic core consists of 2 alpha, 1 beta, 1 beta' and 1 omega subunit. When a sigma factor is associated with the core the holoenzyme is formed, which can initiate transcription. It depends on Mg(2+) as a cofactor. The cofactor is Zn(2+).

It catalyses the reaction RNA(n) + a ribonucleoside 5'-triphosphate = RNA(n+1) + diphosphate. Its function is as follows. DNA-dependent RNA polymerase catalyzes the transcription of DNA into RNA using the four ribonucleoside triphosphates as substrates. The protein is DNA-directed RNA polymerase subunit beta' of Opitutus terrae (strain DSM 11246 / JCM 15787 / PB90-1).